The primary structure comprises 464 residues: uncharacterized protein (464 aa).

12 consecutive transmembrane segments (helical) span residues 7–27 (VLNV…LRTL), 37–57 (LVFY…LVAA), 94–114 (VVWY…LIAP), 121–141 (FYLL…NCFG), 153–173 (ASIG…VWIF), 196–216 (LSLF…AVHA), 231–251 (FYSA…IVIV), 282–302 (VIAV…IIGP), 329–349 (VAIL…FILL), 359–379 (LSDL…AAAI), 401–421 (MSLI…VGFI), and 432–452 (FLFE…PWLF).

It belongs to the amino acid-polyamine-organocation (APC) superfamily.

It is found in the cell membrane. This is an uncharacterized protein from Legionella pneumophila subsp. pneumophila (strain Philadelphia 1 / ATCC 33152 / DSM 7513).